Consider the following 327-residue polypeptide: ATPase GET3 (327 aa).

An ATP-binding site is contributed by 27 to 34 (KGGVGKTT). Asp-56 is an active-site residue. Glu-231 and Asn-258 together coordinate ATP. Zn(2+) is bound by residues Cys-269 and Cys-272.

The protein belongs to the arsA ATPase family. In terms of assembly, homodimer. Component of the Golgi to ER traffic (GET) complex, which is composed of GET1, GET2 and GET3. Within the complex, GET1 and GET2 form a heterotetramer which is stabilized by phosphatidylinositol binding and which binds to the GET3 homodimer. Interacts with the chloride channel protein GEF1.

The protein resides in the cytoplasm. It localises to the endoplasmic reticulum. Its subcellular location is the golgi apparatus. Its function is as follows. ATPase required for the post-translational delivery of tail-anchored (TA) proteins to the endoplasmic reticulum. Recognizes and selectively binds the transmembrane domain of TA proteins in the cytosol. This complex then targets to the endoplasmic reticulum by membrane-bound receptors GET1 and GET2, where the tail-anchored protein is released for insertion. This process is regulated by ATP binding and hydrolysis. ATP binding drives the homodimer towards the closed dimer state, facilitating recognition of newly synthesized TA membrane proteins. ATP hydrolysis is required for insertion. Subsequently, the homodimer reverts towards the open dimer state, lowering its affinity for the GET1-GET2 receptor, and returning it to the cytosol to initiate a new round of targeting. Cooperates with the HDEL receptor ERD2 to mediate the ATP-dependent retrieval of resident ER proteins that contain a C-terminal H-D-E-L retention signal from the Golgi to the ER. Involved in low-level resistance to the oxyanions arsenite and arsenate, and in heat tolerance. The protein is ATPase GET3 of Yarrowia lipolytica (strain CLIB 122 / E 150) (Yeast).